Reading from the N-terminus, the 355-residue chain is Acidic fibroblast growth factor intracellular-binding protein B (355 aa).

In terms of assembly, interacts with IER2.

It localises to the nucleus. The protein localises to the endomembrane system. In terms of biological role, mediates with IER2 FGF-signaling in Kupffer's vesicle ciliogenesis and in the establishment of laterality in the embryo. May be involved in mitogenic function of FGF1. In Danio rerio (Zebrafish), this protein is Acidic fibroblast growth factor intracellular-binding protein B.